Consider the following 849-residue polypeptide: BRCT-containing protein 1 (849 aa).

3 consecutive BRCT domains span residues methionine 1 to cysteine 75, asparagine 76 to phenylalanine 167, and proline 282 to valine 370. Disordered stretches follow at residues glutamine 453–aspartate 519 and lysine 606–alanine 632. Residues glutamate 480–serine 493 are compositionally biased toward basic and acidic residues. BRCT domains are found at residues serine 625–leucine 715 and glutamine 738–aspartate 843.

In terms of assembly, interacts with gammaH2A; binds phosphohistone H2A (gammaH2A) formed by Rad3/ATR checkpoint kinase at DNA lesions. Interacts with Rhp18/Rad18. Interacts with Nse5-Nse6; this allows to tether Smc5-Smc6 at replicative DNA lesions.

It localises to the nucleus. Its subcellular location is the chromosome. Its function is as follows. Required for resumption of chromosome replication after DNA damage, specifically in S phase. Is recruited to chromatin in response to stalled replication forks and acts as a scaffold during DNA repair. Required for the accumulation of the Smc5-Smc6 genome stability complex in foci during replication stress and for activation of the intrinsic SUMO ligase activity of the complex by collapsed replication forks. In pericentromeric heterochromatin, enhances Clr4/Suv39-mediated H3 Lys-9 dimethylation (H3K9me2), required for stabilization of stalled replication forks and accurate chromosome segregation during mitosis. Required for mitotic fidelity, specifically in the G2 phase of the cell cycle. Plays a role in chromatin organization. This is BRCT-containing protein 1 (brc1) from Schizosaccharomyces pombe (strain 972 / ATCC 24843) (Fission yeast).